A 157-amino-acid chain; its full sequence is Small ribosomal subunit protein uS7c (157 aa).

The protein belongs to the universal ribosomal protein uS7 family. In terms of assembly, part of the 30S ribosomal subunit.

It is found in the plastid. It localises to the organellar chromatophore. In terms of biological role, one of the primary rRNA binding proteins, it binds directly to 16S rRNA where it nucleates assembly of the head domain of the 30S subunit. This is Small ribosomal subunit protein uS7c (rps7) from Paulinella chromatophora.